We begin with the raw amino-acid sequence, 47 residues long: MKKFRWLVLIVVVLACLVLWAQVINIMCDQDVQFFSGICAINKFIPW.

A helical membrane pass occupies residues 6–26; the sequence is WLVLIVVVLACLVLWAQVINI.

It belongs to the MgrB family. May form homooligomers. Probably interacts with the periplasmic domain of PhoQ.

The protein localises to the cell inner membrane. PhoP-regulated transcription is redox-sensitive, being activated when the periplasm becomes more reducing. MgrB acts between DsbA/DsbB and PhoP/PhoQ in this pathway. Represses PhoP/PhoQ signaling, possibly by binding to the periplasmic domain of PhoQ, altering its activity and that of downstream effector PhoP. This chain is PhoP/PhoQ regulator MgrB, found in Escherichia fergusonii (strain ATCC 35469 / DSM 13698 / CCUG 18766 / IAM 14443 / JCM 21226 / LMG 7866 / NBRC 102419 / NCTC 12128 / CDC 0568-73).